The sequence spans 93 residues: Small ribosomal subunit protein uS19 (93 aa).

Belongs to the universal ribosomal protein uS19 family.

Functionally, protein S19 forms a complex with S13 that binds strongly to the 16S ribosomal RNA. The sequence is that of Small ribosomal subunit protein uS19 from Ligilactobacillus salivarius (strain UCC118) (Lactobacillus salivarius).